The primary structure comprises 422 residues: GTPase Obg (422 aa).

The 156-residue stretch at 1 to 156 folds into the Obg domain; that stretch reads MKFIDEVNVL…FALRLVLKVL (156 aa). Positions 157–324 constitute an OBG-type G domain; it reads ADVGLVGKPS…LKAAIFKMLE (168 aa). GTP-binding positions include 163-170, 188-192, 209-212, 278-281, and 305-307; these read GKPSAGKS, FTTLV, DLPG, NKSD, and SAL. Mg(2+)-binding residues include S170 and T190. An OCT domain is found at 342 to 420; it reads NITLDRDALK…IGNFEFDWSD (79 aa).

Belongs to the TRAFAC class OBG-HflX-like GTPase superfamily. OBG GTPase family. In terms of assembly, monomer. Mg(2+) is required as a cofactor.

It localises to the cytoplasm. An essential GTPase which binds GTP, GDP and possibly (p)ppGpp with moderate affinity, with high nucleotide exchange rates and a fairly low GTP hydrolysis rate. Plays a role in control of the cell cycle, stress response, ribosome biogenesis and in those bacteria that undergo differentiation, in morphogenesis control. This is GTPase Obg from Metamycoplasma arthritidis (strain 158L3-1) (Mycoplasma arthritidis).